We begin with the raw amino-acid sequence, 390 residues long: MPVLTDPLQLLQALIRCPSVTPYEAGALSTLEQILTKMGFNVKRPVFTDKNTEDVENLYAKMGGEGRHLMFAGHTDVVPPGALEDWTYPPFEGVIDQGKLYGRGAVDMKGGIACFVAALARILEKRSIKGMVSLLITGDEEGPALNGTVKLLKWAEQKGEKWTAALVGEPTSVKTVGDVIKIGRRGSLSGVVTVKGRQGHVAFPERAANPLPLAGKLIQALTQTALDRGTENFQPSNLELTTIDTDNPAVNVIPAQTTIRFNIRYNDVWTKETLMTEIEKRLASVQLKNNDYQYPYYQLEWIPSLGSVFITKNDKLIKTLSNAIESVTGNIPEYSTSGGTSDARFIKDYCPVVEFGLPGQTMHMVDECVTLDAIETLTSVYERFIVDFFA.

Zn(2+) is bound at residue histidine 74. Aspartate 76 is a catalytic residue. Aspartate 107 is a binding site for Zn(2+). The active-site Proton acceptor is the glutamate 140. Glutamate 141, glutamate 169, and histidine 363 together coordinate Zn(2+).

Belongs to the peptidase M20A family. DapE subfamily. As to quaternary structure, homodimer. Zn(2+) serves as cofactor. It depends on Co(2+) as a cofactor.

The enzyme catalyses N-succinyl-(2S,6S)-2,6-diaminopimelate + H2O = (2S,6S)-2,6-diaminopimelate + succinate. The protein operates within amino-acid biosynthesis; L-lysine biosynthesis via DAP pathway; LL-2,6-diaminopimelate from (S)-tetrahydrodipicolinate (succinylase route): step 3/3. Functionally, catalyzes the hydrolysis of N-succinyl-L,L-diaminopimelic acid (SDAP), forming succinate and LL-2,6-diaminopimelate (DAP), an intermediate involved in the bacterial biosynthesis of lysine and meso-diaminopimelic acid, an essential component of bacterial cell walls. This Bartonella quintana (strain Toulouse) (Rochalimaea quintana) protein is Succinyl-diaminopimelate desuccinylase.